Here is a 319-residue protein sequence, read N- to C-terminus: Methionyl-tRNA formyltransferase (319 aa).

Residue 116–119 (SLLP) coordinates (6S)-5,6,7,8-tetrahydrofolate.

The protein belongs to the Fmt family.

The enzyme catalyses L-methionyl-tRNA(fMet) + (6R)-10-formyltetrahydrofolate = N-formyl-L-methionyl-tRNA(fMet) + (6S)-5,6,7,8-tetrahydrofolate + H(+). In terms of biological role, attaches a formyl group to the free amino group of methionyl-tRNA(fMet). The formyl group appears to play a dual role in the initiator identity of N-formylmethionyl-tRNA by promoting its recognition by IF2 and preventing the misappropriation of this tRNA by the elongation apparatus. In Chlorobium phaeovibrioides (strain DSM 265 / 1930) (Prosthecochloris vibrioformis (strain DSM 265)), this protein is Methionyl-tRNA formyltransferase.